Reading from the N-terminus, the 637-residue chain is 1-deoxy-D-xylulose-5-phosphate synthase 1 (637 aa).

Thiamine diphosphate is bound by residues His74 and 115-117 (GHS). Position 146 (Asp146) interacts with Mg(2+). Thiamine diphosphate is bound by residues 147-148 (GS), Asn175, Tyr286, and Glu368. Asn175 lines the Mg(2+) pocket.

This sequence belongs to the transketolase family. DXPS subfamily. In terms of assembly, homodimer. Mg(2+) serves as cofactor. It depends on thiamine diphosphate as a cofactor.

It catalyses the reaction D-glyceraldehyde 3-phosphate + pyruvate + H(+) = 1-deoxy-D-xylulose 5-phosphate + CO2. Its pathway is metabolic intermediate biosynthesis; 1-deoxy-D-xylulose 5-phosphate biosynthesis; 1-deoxy-D-xylulose 5-phosphate from D-glyceraldehyde 3-phosphate and pyruvate: step 1/1. Catalyzes the acyloin condensation reaction between C atoms 2 and 3 of pyruvate and glyceraldehyde 3-phosphate to yield 1-deoxy-D-xylulose-5-phosphate (DXP). In Geobacter sulfurreducens (strain ATCC 51573 / DSM 12127 / PCA), this protein is 1-deoxy-D-xylulose-5-phosphate synthase 1.